Reading from the N-terminus, the 408-residue chain is Branched-chain amino acid aminotransferase 2, chloroplastic (408 aa).

A chloroplast-targeting transit peptide spans 1 to 58 (MDCAAALLPGFHPNYLLCPSRHFSSLLPKTDLSSPLKFQLQNKQLSLASSHGFSPVIC). Arginine 152 provides a ligand contact to pyridoxal 5'-phosphate. Catalysis depends on lysine 254, which acts as the Proton acceptor. Lysine 254 is modified (N6-(pyridoxal phosphate)lysine). Glutamate 290 lines the pyridoxal 5'-phosphate pocket.

This sequence belongs to the class-IV pyridoxal-phosphate-dependent aminotransferase family. The cofactor is pyridoxal 5'-phosphate. Expressed in lupulin glands and leaves.

The protein resides in the plastid. Its subcellular location is the chloroplast. It carries out the reaction L-isoleucine + 2-oxoglutarate = (S)-3-methyl-2-oxopentanoate + L-glutamate. It catalyses the reaction L-leucine + 2-oxoglutarate = 4-methyl-2-oxopentanoate + L-glutamate. The enzyme catalyses L-valine + 2-oxoglutarate = 3-methyl-2-oxobutanoate + L-glutamate. Its pathway is amino-acid biosynthesis; L-isoleucine biosynthesis; L-isoleucine from 2-oxobutanoate: step 4/4. The protein operates within amino-acid biosynthesis; L-leucine biosynthesis; L-leucine from 3-methyl-2-oxobutanoate: step 4/4. It functions in the pathway amino-acid biosynthesis; L-valine biosynthesis; L-valine from pyruvate: step 4/4. Functionally, converts 2-oxo acids to branched-chain amino acids. Shows no kinetic preferences corresponding to anabolic or catabolic functions, but likely involved in BCAA biosynthesis. This chain is Branched-chain amino acid aminotransferase 2, chloroplastic, found in Humulus lupulus (European hop).